Here is a 1282-residue protein sequence, read N- to C-terminus: Indigoidine synthase (1282 aa).

The adenylation stretch occupies residues 24–379; sequence AQRVAEHPEA…GGIQLARGYL (356 aa). One can recognise a Carrier domain in the interval 937 to 1012; it reads APRTETEKEI…KLARRLEREV (76 aa). Ser972 is subject to O-(pantetheine 4'-phosphoryl)serine. Residues 1030–1138 form a thioesterase region; it reads RPVICWPGLG…APGSPKVRAE (109 aa).

This sequence belongs to the ATP-dependent AMP-binding enzyme family. Requires pantetheine 4'-phosphate as cofactor.

It carries out the reaction 2 FMN + 2 L-glutamine + 2 ATP + O2 = indigoidine + 2 FMNH2 + 2 AMP + 2 diphosphate + 2 H2O. It catalyses the reaction FMN + L-glutamine + ATP = 3-amino-1,5-dihydropyridine-2,6-dione + FMNH2 + AMP + diphosphate. The catalysed reaction is 2 3-amino-1,5-dihydropyridine-2,6-dione + O2 = indigoidine + 2 H2O. Its pathway is pigment biosynthesis. Functionally, nonribosomal peptide synthetase involved in the biosynthesis of the blue pigment indigoidine. Catalyzes the synthesis of the blue pigment using L-Gln as a substrate. Two glutamine molecules are cyclized and oxidized to form indigoidine. In Streptomyces lavendulae, this protein is Indigoidine synthase.